Here is a 525-residue protein sequence, read N- to C-terminus: PTSPLVFVPSSPRLSPFMHPPSHHYLETTSTPVYRSSVSSSQQQLSREDQCGTSDDSYSVGESGAGAGAGAGGFEMAKEMRFCAVCSDYASGYDYGVWSCEGCKAFFKRSIQGHNDYMCPATNQCTIDRNRRKSCQACRLRKCYQVGMMKGGVRKDRGRVLRRDKRRTGTSDKASKDLEHRTAPPQDRRKHSSSSSSAGGGGKSSIIGMSPDQVLLLLQGAEPPVLCSRQKLSRPYTEVTMMTLLTSMADKELVHMIAWAKKLPGFLQLSLHDQVQLLESSWLEVLMIGLIWRSIHCPGKLIFAQDLILDRSEGDCVEGMAEIFDMLLATTSRFRMLKLKTEEFVCLKAIILLNSGAFSFCTGTMEPLHDGAAVQNMLDTITDALIHHISQSGCSAQQQSRRQAHLLLLLSHIRHMSNKGMEHLYSMKCKNKVPLYDLLLEMLDAHRIHRPDRPAESWSQADREPPYTTSNNNNSSSSSGGGDGGPSSAGSGSGPRVNHESLSRAPTGPGVLQYGGPRSDCTHIL.

Residues 1-59 are disordered; it reads PTSPLVFVPSSPRLSPFMHPPSHHYLETTSTPVYRSSVSSSQQQLSREDQCGTSDDSYS. Positions 1–82 are modulating; sequence PTSPLVFVPS…GFEMAKEMRF (82 aa). The segment covering 36-45 has biased composition (low complexity); sequence SSVSSSQQQL. NR C4-type zinc fingers lie at residues 83–103 and 119–143; these read CAVC…CEGC and CPAT…LRKC. Positions 83–148 form a DNA-binding region, nuclear receptor; the sequence is CAVCSDYASG…RLRKCYQVGM (66 aa). The segment at 149-209 is hinge; sequence MKGGVRKDRG…GGGKSSIIGM (61 aa). Positions 154–182 are enriched in basic and acidic residues; it reads RKDRGRVLRRDKRRTGTSDKASKDLEHRT. Residues 154-203 form a disordered region; it reads RKDRGRVLRRDKRRTGTSDKASKDLEHRTAPPQDRRKHSSSSSSAGGGGK. The NR LBD domain occupies 210 to 446; sequence SPDQVLLLLQ…DLLLEMLDAH (237 aa). Basic and acidic residues predominate over residues 452–465; the sequence is DRPAESWSQADREP. The segment at 452 to 525 is disordered; that stretch reads DRPAESWSQA…GPRSDCTHIL (74 aa). Positions 479-493 are enriched in gly residues; sequence SGGGDGGPSSAGSGS.

The protein belongs to the nuclear hormone receptor family. NR3 subfamily. Binds DNA as a homodimer. Can form a heterodimer with ER-beta. Abundant in the liver, less abundant in the testes and barely detectable in the ovary and brain.

It localises to the nucleus. In terms of biological role, the steroid hormones and their receptors are involved in the regulation of eukaryotic gene expression and affect cellular proliferation and differentiation in target tissues. The polypeptide is Estrogen receptor (esr1) (Micropogonias undulatus (Atlantic croaker)).